The sequence spans 454 residues: Gustatory and odorant receptor 21a (454 aa).

Residues 1-114 (MTFLDRTMSF…LPRTGYSWGS (114 aa)) are Cytoplasmic-facing. A helical transmembrane segment spans residues 115–135 (KQVMWAIFIYSCQTTIVVLVL). Over 136-153 (RERVKKFVTSPDKRFDEA) the chain is Extracellular. Residues 154-174 (IYNVIFISLLFTNFLLPVASW) form a helical membrane-spanning segment. Residues 175-206 (RHGPQVAIFKNMWTNYQYKFFKTTGSPIVFPN) are Cytoplasmic-facing. Residues 207 to 227 (LYPLTWSLCVFSWLLSIAINL) form a helical membrane-spanning segment. The Extracellular portion of the chain corresponds to 228–237 (SQYFLQPDFR). The chain crosses the membrane as a helical span at residues 238-258 (LWYTFAYYPIIAMLNCFCSLW). Residues 259-312 (YINCNAFGTASRALSDALQTTIRGEKPAQKLTEYRHLWVDLSHMMQQLGRAYSN) lie on the Cytoplasmic side of the membrane. A helical transmembrane segment spans residues 313–333 (MYGMYCLVIFFTTIIATYGSI). Over 334–345 (SEIIDHGATYKE) the chain is Extracellular. A helical membrane pass occupies residues 346–366 (VGLFVIVFYCMGLLYIICNEA). Residues 367-422 (HYASRKVGLDFQTKLLNINLTAVDAATQKEVEMLLVAINKNPPIMNLDGYANINRE) lie on the Cytoplasmic side of the membrane. Residues 423–443 (LITTNISFMATYLVVLLQFKI) form a helical membrane-spanning segment. The Extracellular segment spans residues 444-454 (TEQRRIGQQQA).

It belongs to the insect chemoreceptor superfamily. Gustatory receptor (GR) family. Gr21a subfamily. Gr21a and Gr63a probably form a heterodimer that responds to CO(2). In terms of tissue distribution, expressed in the adult labellar chemosensory neurons. Carbon dioxide-responsive neurons coexpress Gr21a and Gr63a in a pair of chemosensory receptors at both larval and adult life stages. A single bilateral neuron, expressing the Gr21a receptor, is responsible for CO(2) detection in larvae.

It is found in the cell membrane. Gustatory and odorant receptor which mediates acceptance or avoidance behavior, depending on its substrates. Gr21a and Gr63a together are sufficient for carbon dioxide detection and avoidance behavior. It is possible that the CO(2) receptors Gr63a and Gr21a activate the TRPC channels through Galpha49B and Plc21C. This innate olfactory avoidance behavior can be inhibited by inhibitory interactions of the odors such as 1-hexanol and 2,3-butanedione with Gr21a and Gr63a. The chain is Gustatory and odorant receptor 21a (Gr21a) from Drosophila melanogaster (Fruit fly).